The sequence spans 1071 residues: Methionine S-methyltransferase (1071 aa).

A2 is subject to N-acetylalanine.

This sequence belongs to the class I-like SAM-binding methyltransferase superfamily. In terms of assembly, homotetramer. As to expression, expressed in roots, rosette leaves and cauline leaves. Expressed at a lower level in developing seeds.

The protein resides in the cytoplasm. The enzyme catalyses L-methionine + S-adenosyl-L-methionine = S-methyl-L-methionine + S-adenosyl-L-homocysteine. Its function is as follows. Catalyzes the S-methylmethionine (SMM) biosynthesis from adenosyl-L-homocysteine (AdoMet) and methionine. SMM biosynthesis (by MMT1) and degradation (by HMT-1, HMT-2 and HMT-3) constitute the SMM cycle in plants, which is probably required to achieve short term control of AdoMet level. Also able to catalyze the selenium-methylmethionine (SeMM) from AdoMet and selenium-methionine (SeMet). May play a role in phoem sulfur transport; such function is however not essential. The polypeptide is Methionine S-methyltransferase (MMT1) (Arabidopsis thaliana (Mouse-ear cress)).